The chain runs to 99 residues: uncharacterized protein (99 aa).

In terms of domain architecture, TM2 spans 32–79; the sequence is KKSVGIAVLLSFIIPGAGQMYLGRVGKGIILLLTCWLIIPWIYSIYDA. 2 helical membrane passes run 34–54 and 56–76; these read SVGIAVLLSFIIPGAGQMYLG and VGKGIILLLTCWLIIPWIYSI.

The protein localises to the cell membrane. This is an uncharacterized protein from Methanocaldococcus jannaschii (strain ATCC 43067 / DSM 2661 / JAL-1 / JCM 10045 / NBRC 100440) (Methanococcus jannaschii).